Here is a 346-residue protein sequence, read N- to C-terminus: Nucleoplasmin-like protein ANO39 (346 aa).

Ser2 is subject to N-acetylserine. Asn85 carries N-linked (GlcNAc...) asparagine glycosylation. Over residues Asp123–Glu141 the composition is skewed to acidic residues. The interval Asp123 to Leu285 is disordered. A Phosphoserine; by CDC2 modification is found at Ser145. The span at Ala171–Lys180 shows a compositional bias: basic and acidic residues. Residues Glu181–Ser247 are compositionally biased toward acidic residues. A glycan (N-linked (GlcNAc...) asparagine) is linked at Asn264. A compositionally biased stretch (basic and acidic residues) spans Gly271 to Leu285.

The protein belongs to the nucleoplasmin family. Post-translationally, phosphorylation occurs in oocytes during the progression of the first meiotic M phase. No phosphorylation is observed in immature oocytes. In terms of tissue distribution, expressed specifically in the oocytes of the ovaries.

The protein localises to the nucleus. It localises to the nucleolus. It is found in the cytoplasm. Its function is as follows. Binds double-stranded RNA and both single-stranded and double-stranded DNA. The protein is Nucleoplasmin-like protein ANO39 of Patiria pectinifera (Starfish).